Reading from the N-terminus, the 142-residue chain is Galectin-10 (142 aa).

Ser-2 is subject to N-acetylserine. The 133-residue stretch at 6-138 (VPYTEAASLS…DISLTKFNVS (133 aa)) folds into the Galectin domain.

As to quaternary structure, interacts with CEL. As to expression, expressed abundantly in the bone marrow. Expressed exclusively by eosinophils and basophils. Not detected in monocytes and neutrophils. Expressed in CD25-positive regulatory T-cells (Treg) (at protein level). Found in intestinal tissue from patients with Celiac disease, expression is directly related to the histological grade of mucosal damage and to the number of eosinophils found in the duodenal lesion (at protein level). Found in sputum of patients with eosinophilic inflammatory diseases such as asthma (at protein level).

The protein resides in the cytoplasm. Its subcellular location is the cytosol. It localises to the cytoplasmic granule. Functionally, regulates immune responses through the recognition of cell-surface glycans. Essential for the anergy and suppressive function of CD25-positive regulatory T-cells (Treg). The sequence is that of Galectin-10 (CLC) from Homo sapiens (Human).